The sequence spans 424 residues: Dihydroorotase (424 aa).

2 residues coordinate Zn(2+): His-60 and His-62. Residues 62–64 (HFR) and Asn-94 each bind substrate. Positions 151, 178, and 231 each coordinate Zn(2+). Asn-277 contacts substrate. Asp-304 contributes to the Zn(2+) binding site. Asp-304 is an active-site residue. His-308 contributes to the substrate binding site.

It belongs to the metallo-dependent hydrolases superfamily. DHOase family. Class I DHOase subfamily. Requires Zn(2+) as cofactor.

It catalyses the reaction (S)-dihydroorotate + H2O = N-carbamoyl-L-aspartate + H(+). Its pathway is pyrimidine metabolism; UMP biosynthesis via de novo pathway; (S)-dihydroorotate from bicarbonate: step 3/3. In terms of biological role, catalyzes the reversible cyclization of carbamoyl aspartate to dihydroorotate. The chain is Dihydroorotase from Clostridium acetobutylicum (strain ATCC 824 / DSM 792 / JCM 1419 / IAM 19013 / LMG 5710 / NBRC 13948 / NRRL B-527 / VKM B-1787 / 2291 / W).